The primary structure comprises 338 residues: Ketol-acid reductoisomerase (NADP(+)) (338 aa).

Residues 1–181 (MKVYYDKDAD…GGTKGGVIET (181 aa)) form the KARI N-terminal Rossmann domain. NADP(+) contacts are provided by residues 24–27 (YGSQ), Arg-47, and Ser-52. The active site involves His-107. Position 133 (Gly-133) interacts with NADP(+). The KARI C-terminal knotted domain occupies 182-327 (NFREETETDL…GQLRDMMPWI (146 aa)). The Mg(2+) site is built by Asp-190, Glu-194, Glu-226, and Glu-230. Ser-251 lines the substrate pocket.

It belongs to the ketol-acid reductoisomerase family. It depends on Mg(2+) as a cofactor.

It carries out the reaction (2R)-2,3-dihydroxy-3-methylbutanoate + NADP(+) = (2S)-2-acetolactate + NADPH + H(+). The catalysed reaction is (2R,3R)-2,3-dihydroxy-3-methylpentanoate + NADP(+) = (S)-2-ethyl-2-hydroxy-3-oxobutanoate + NADPH + H(+). The protein operates within amino-acid biosynthesis; L-isoleucine biosynthesis; L-isoleucine from 2-oxobutanoate: step 2/4. It functions in the pathway amino-acid biosynthesis; L-valine biosynthesis; L-valine from pyruvate: step 2/4. In terms of biological role, involved in the biosynthesis of branched-chain amino acids (BCAA). Catalyzes an alkyl-migration followed by a ketol-acid reduction of (S)-2-acetolactate (S2AL) to yield (R)-2,3-dihydroxy-isovalerate. In the isomerase reaction, S2AL is rearranged via a Mg-dependent methyl migration to produce 3-hydroxy-3-methyl-2-ketobutyrate (HMKB). In the reductase reaction, this 2-ketoacid undergoes a metal-dependent reduction by NADPH to yield (R)-2,3-dihydroxy-isovalerate. The protein is Ketol-acid reductoisomerase (NADP(+)) of Aromatoleum aromaticum (strain DSM 19018 / LMG 30748 / EbN1) (Azoarcus sp. (strain EbN1)).